Reading from the N-terminus, the 116-residue chain is uncharacterized protein (116 aa).

Helical transmembrane passes span Val24 to Ala44 and Val70 to Ser90.

The protein localises to the membrane. This is an uncharacterized protein from Saccharomyces cerevisiae (strain ATCC 204508 / S288c) (Baker's yeast).